The following is a 227-amino-acid chain: Probable septum site-determining protein MinC (227 aa).

Belongs to the MinC family. As to quaternary structure, interacts with MinD and FtsZ.

In terms of biological role, cell division inhibitor that blocks the formation of polar Z ring septums. Rapidly oscillates between the poles of the cell to destabilize FtsZ filaments that have formed before they mature into polar Z rings. Prevents FtsZ polymerization. This chain is Probable septum site-determining protein MinC, found in Laribacter hongkongensis (strain HLHK9).